Here is a 93-residue protein sequence, read N- to C-terminus: uncharacterized protein (93 aa).

Transmembrane regions (helical) follow at residues 15–35 (MAGL…VMLV), 48–68 (ILAI…IYQI), and 72–92 (LSYA…AGVH).

It localises to the cell membrane. This is an uncharacterized protein from Bacillus subtilis (strain 168).